We begin with the raw amino-acid sequence, 367 residues long: MRRMLVIRWILAIHLIATQVFAERIKDIATLAGVRVNQLVGYGLVVGLSGTGDKTGTKFTEDSFANMLTQLGINVPPGVRLNSKNIAAVMVTANLSSFMKKGQTMDVNISSIGDSKSLLGGTLLLTPLKGADGRVYAMSQGNVVVSGISASGSDGSSVTVNIPSGGRIPNGATIEADIPNPFYYSNSLTYNLHTPDFTTAKRMSDAINELMGPGTAKAIDAGSVVVTAPKKLSQRVDYVSVLENIEFKPGEAMAKIIINARTGTVVISSNVIVKSAAVSHGNLVVSITETPVISQPNAFASGRTVATQQSQVNIQQKNNRAFILPKGTTLKDIVRGINAVGATPADVISILEALQQAGALSATLIVI.

Positions 1 to 22 (MRRMLVIRWILAIHLIATQVFA) are cleaved as a signal peptide.

The protein belongs to the FlgI family. As to quaternary structure, the basal body constitutes a major portion of the flagellar organelle and consists of four rings (L,P,S, and M) mounted on a central rod.

The protein resides in the periplasm. It is found in the bacterial flagellum basal body. Assembles around the rod to form the L-ring and probably protects the motor/basal body from shearing forces during rotation. This is Flagellar P-ring protein from Legionella pneumophila (strain Lens).